We begin with the raw amino-acid sequence, 130 residues long: Glycine cleavage system H protein (130 aa).

Residues 24 to 106 (TVTIGITDHA…YDEGWFFKVK (83 aa)) enclose the Lipoyl-binding domain. Lys65 carries the post-translational modification N6-lipoyllysine.

This sequence belongs to the GcvH family. The glycine cleavage system is composed of four proteins: P, T, L and H. (R)-lipoate serves as cofactor.

The glycine cleavage system catalyzes the degradation of glycine. The H protein shuttles the methylamine group of glycine from the P protein to the T protein. This chain is Glycine cleavage system H protein, found in Teredinibacter turnerae (strain ATCC 39867 / T7901).